A 387-amino-acid polypeptide reads, in one-letter code: Phosphoglycerate kinase (387 aa).

Residues 21–23 (DLN), Arg36, 59–62 (HLGR), Arg113, and Arg146 contribute to the substrate site. ATP-binding positions include Lys197, Glu314, and 340 to 343 (GGDT).

This sequence belongs to the phosphoglycerate kinase family. Monomer.

It is found in the cytoplasm. It carries out the reaction (2R)-3-phosphoglycerate + ATP = (2R)-3-phospho-glyceroyl phosphate + ADP. The protein operates within carbohydrate degradation; glycolysis; pyruvate from D-glyceraldehyde 3-phosphate: step 2/5. The sequence is that of Phosphoglycerate kinase from Pseudomonas syringae pv. tomato (strain ATCC BAA-871 / DC3000).